Here is a 1132-residue protein sequence, read N- to C-terminus: Phycobiliprotein ApcE (1132 aa).

Cys196 contributes to the (2R,3E)-phycocyanobilin binding site. PBS-linker domains lie at 253–433 (DQQG…FRKV), 514–692 (LGPK…EKQE), 709–887 (PDID…KQNN), and 940–1121 (GRGQ…SSLS).

This sequence belongs to the phycobilisome linker protein family. Heterodimer of ApcF (a variant beta-allophycocyanin). Phycobilisomes of this organism are composed of a two cylinder core, from which six rods radiate. The core is mainly composed of allophycocyanin alpha and beta chains and of minor components. Post-translationally, contains one covalently linked bilin chromophore. This protein autochromophorylates.

It is found in the cellular thylakoid membrane. Functionally, this protein is postulated to act both as terminal energy acceptor (by its phycobilin-like domains) and as a linker polypeptide (by its repeats and arms) that stabilizes the phycobilisome core architecture. Has intrinsic bilin lyase activity. The chain is Phycobiliprotein ApcE (apcE) from Nostoc sp. (strain PCC 7120 / SAG 25.82 / UTEX 2576).